A 168-amino-acid polypeptide reads, in one-letter code: Plastocyanin, chloroplastic (168 aa).

In terms of domain architecture, Plastocyanin-like spans 70–168; sequence VEVLLGGGDG…AGMVGKVTVN (99 aa). Positions 106, 153, 156, and 161 each coordinate Cu cation.

The protein belongs to the plastocyanin family. The cofactor is Cu(2+).

The protein localises to the plastid. It localises to the chloroplast thylakoid membrane. Functionally, participates in electron transfer between P700 and the cytochrome b6-f complex in photosystem I. The chain is Plastocyanin, chloroplastic (PETE) from Spinacia oleracea (Spinach).